Reading from the N-terminus, the 439-residue chain is Serine/threonine-protein kinase 2 (439 aa).

Residues 87–439 enclose the Protein kinase domain; the sequence is NDDFYHISTG…IFSDWINGGN (353 aa). Residues 93 to 101 and K117 contribute to the ATP site; that span reads ISTGGYGIV. D307 serves as the catalytic Proton acceptor.

It belongs to the protein kinase superfamily. Ser/Thr protein kinase family. Poxviruses subfamily. Phosphorylated in vivo. Autophosphorylated in vitro.

It is found in the host endoplasmic reticulum. The protein localises to the host endoplasmic reticulum-Golgi intermediate compartment. The catalysed reaction is L-seryl-[protein] + ATP = O-phospho-L-seryl-[protein] + ADP + H(+). It catalyses the reaction L-threonyl-[protein] + ATP = O-phospho-L-threonyl-[protein] + ADP + H(+). Functionally, essential serine-protein kinase involved in the early stage of virion morphogenesis. The sequence is that of Serine/threonine-protein kinase 2 (OPG054) from Vaccinia virus (strain Copenhagen) (VACV).